We begin with the raw amino-acid sequence, 74 residues long: Tetrahydromethanopterin S-methyltransferase subunit G (74 aa).

Residues 50–70 (IGILYGLVIGLYLCMLYILLG) form a helical membrane-spanning segment.

The protein belongs to the MtrG family. As to quaternary structure, the complex is composed of 8 subunits; MtrA, MtrB, MtrC, MtrD, MtrE, MtrF, MtrG and MtrH.

The protein localises to the cell membrane. It catalyses the reaction 5-methyl-5,6,7,8-tetrahydromethanopterin + coenzyme M + 2 Na(+)(in) = 5,6,7,8-tetrahydromethanopterin + methyl-coenzyme M + 2 Na(+)(out). It participates in one-carbon metabolism; methanogenesis from CO(2); methyl-coenzyme M from 5,10-methylene-5,6,7,8-tetrahydromethanopterin: step 2/2. Functionally, part of a complex that catalyzes the formation of methyl-coenzyme M and tetrahydromethanopterin from coenzyme M and methyl-tetrahydromethanopterin. This is an energy-conserving, sodium-ion translocating step. This is Tetrahydromethanopterin S-methyltransferase subunit G from Methanopyrus kandleri (strain AV19 / DSM 6324 / JCM 9639 / NBRC 100938).